The following is a 199-amino-acid chain: Imidazoleglycerol-phosphate dehydratase (199 aa).

Belongs to the imidazoleglycerol-phosphate dehydratase family.

It localises to the cytoplasm. The catalysed reaction is D-erythro-1-(imidazol-4-yl)glycerol 3-phosphate = 3-(imidazol-4-yl)-2-oxopropyl phosphate + H2O. The protein operates within amino-acid biosynthesis; L-histidine biosynthesis; L-histidine from 5-phospho-alpha-D-ribose 1-diphosphate: step 6/9. The protein is Imidazoleglycerol-phosphate dehydratase of Mesorhizobium japonicum (strain LMG 29417 / CECT 9101 / MAFF 303099) (Mesorhizobium loti (strain MAFF 303099)).